A 687-amino-acid chain; its full sequence is Protein SDA1 homolog (687 aa).

3 disordered regions span residues 517 to 549 (SSDE…SQMR), 561 to 587 (MKQL…EPQG), and 615 to 687 (TVIA…KSKI). Acidic residues predominate over residues 520 to 537 (EEQEDEDPSGENQEGEED). A compositionally biased stretch (basic residues) spans 644-666 (EKRRKKNFMMMRHNKLVRGKTKR). The span at 667 to 680 (SFRDKQIALRDSLL) shows a compositional bias: basic and acidic residues.

Belongs to the SDA1 family.

The protein resides in the nucleus. Its subcellular location is the nucleolus. In terms of biological role, required for 60S pre-ribosomal subunits export to the cytoplasm. This chain is Protein SDA1 homolog (sdad1), found in Nematostella vectensis (Starlet sea anemone).